The primary structure comprises 240 residues: UDP-2,3-diacylglucosamine hydrolase (240 aa).

D8, H10, D41, N78, and H113 together coordinate Mn(2+). 78 to 79 (NR) lines the substrate pocket. Residues D121, S159, N163, K166, and H194 each contribute to the substrate site. H194 and H196 together coordinate Mn(2+).

This sequence belongs to the LpxH family. Requires Mn(2+) as cofactor.

Its subcellular location is the cell inner membrane. The enzyme catalyses UDP-2-N,3-O-bis[(3R)-3-hydroxytetradecanoyl]-alpha-D-glucosamine + H2O = 2-N,3-O-bis[(3R)-3-hydroxytetradecanoyl]-alpha-D-glucosaminyl 1-phosphate + UMP + 2 H(+). Its pathway is glycolipid biosynthesis; lipid IV(A) biosynthesis; lipid IV(A) from (3R)-3-hydroxytetradecanoyl-[acyl-carrier-protein] and UDP-N-acetyl-alpha-D-glucosamine: step 4/6. Its function is as follows. Hydrolyzes the pyrophosphate bond of UDP-2,3-diacylglucosamine to yield 2,3-diacylglucosamine 1-phosphate (lipid X) and UMP by catalyzing the attack of water at the alpha-P atom. Involved in the biosynthesis of lipid A, a phosphorylated glycolipid that anchors the lipopolysaccharide to the outer membrane of the cell. This chain is UDP-2,3-diacylglucosamine hydrolase, found in Shewanella baltica (strain OS155 / ATCC BAA-1091).